Reading from the N-terminus, the 428-residue chain is 47 kDa outer membrane protein (428 aa).

A signal peptide spans 1 to 25; sequence MAKTSKFTQTLLASALAVVAGSASA.

Belongs to the OmpP1/FadL family.

Its subcellular location is the cell outer membrane. The chain is 47 kDa outer membrane protein from Pasteurella multocida (strain Pm70).